The primary structure comprises 761 residues: Signal transducer and transcription activator (761 aa).

The SH2 domain occupies 594–658; it reads WKAGCIMGFI…APWTARDFQV (65 aa). A Phosphotyrosine; by JAK modification is found at tyrosine 711.

Belongs to the transcription factor STAT family. In terms of assembly, forms a homodimer or a heterodimer with a related family member. Post-translationally, tyrosine phosphorylated by hopscotch. Phosphorylation is required for DNA-binding activity and dimerization.

Its subcellular location is the cytoplasm. The protein localises to the nucleus. Might play a role in signal transduction and activation of transcription. Plays an important role in the segmental pattern formation in the early embryo by activating specific stripes of pair rule gene expression in early development as part of the Janus kinase-STAT pathway. Might play a role in male germline stem cell maintenance. This is Signal transducer and transcription activator (Stat92E) from Drosophila melanogaster (Fruit fly).